We begin with the raw amino-acid sequence, 499 residues long: Transcriptional regulator sdnM (499 aa).

The protein resides in the nucleus. It participates in antibiotic biosynthesis. In terms of biological role, transcriptional regulator; part of the gene cluster that mediates the biosynthesis of sordarin and hypoxysordarin, glycoside antibiotics with a unique tetracyclic diterpene aglycone structure. First, the geranylgeranyl diphosphate synthase sdnC constructs GGDP from farnesyl diphosphate and isopentenyl diphosphate. The diterpene cyclase sdnA then catalyzes the cyclization of GGDP to afford cycloaraneosene. Cycloaraneosene is then hydroxylated four times by the putative cytochrome P450 monooxygenases sdnB, sdnE, sdnF and sdnH to give a hydroxylated cycloaraneosene derivative such as cycloaraneosene-8,9,13,19-tetraol. Although the order of the hydroxylations is unclear, at least C8, C9 and C13 of the cycloaraneosene skeleton are hydroxylated before the sordaricin formation. Dehydration of the 13-hydroxy group of the hydroxylated cycloaraneosene derivative might be catalyzed by an unassigned hypothetical protein such as sdnG and sdnP to construct the cyclopentadiene moiety. The FAD-dependent oxidoreductase sdnN is proposed to catalyze the oxidation at C9 of the hydroxylated cycloaraneosene derivative and also catalyze the Baeyer-Villiger oxidation to give the lactone intermediate. The presumed lactone intermediate would be hydrolyzed to give an acrolein moiety and a carboxylate moiety. Then, [4+2]cycloaddition would occur between the acrolein moiety and the cyclopentadiene moiety to give sordaricin. SdnN might also be involved in the [4+2]cycloaddition after the hypothesized oxidation to accommodate the oxidized product and prompt the [4+2]cycloaddition. GDP-6-deoxy-D-altrose may be biosynthesized from GDP-D-mannose by the putative GDP-mannose-4,6-dehydratase sdnI and the short-chain dehydrogenase sdnK. The glycosyltransferase sdnJ catalyzes the attachment of 6-deoxy-D-altrose onto the 19-hydroxy group of sordaricin to give 4'-O-demethylsordarin. The methyltransferase sdnD would complete the biosynthesis of sordarin. Sordarin can be further modified into hypoxysordarin. The unique acyl chain at the 3'-hydroxy group of hypoxysordarin would be constructed by an iterative type I PKS sdnO and the trans-acting polyketide methyltransferase sdnL. SdnL would be responsible for the introduction of an alpha-methyl group of the polyketide chain. Alternatively, the beta-lactamase-like protein sdnR might be responsible for the cleavage and transfer of the polyketide chain from the PKS sdnO to sordarin. Two putative cytochrome P450 monooxygenases, sdnQ and sdnT, might catalyze the epoxidations of the polyketide chain to complete the biosynthesis of hypoxysordarin. Transcriptional regulators sdnM and sdnS are presumably encoded for the transcriptional regulation of the expression of the sdn gene cluster. In Sordaria araneosa (Pleurage araneosa), this protein is Transcriptional regulator sdnM.